A 266-amino-acid polypeptide reads, in one-letter code: Putative tyrosine phosphatase 197R (266 aa).

One can recognise a Tyrosine-protein phosphatase domain in the interval Arg15 to Asp167. The Phosphocysteine intermediate role is filled by Cys111.

Belongs to the protein-tyrosine phosphatase family.

It catalyses the reaction O-phospho-L-tyrosyl-[protein] + H2O = L-tyrosyl-[protein] + phosphate. The chain is Putative tyrosine phosphatase 197R from Invertebrate iridescent virus 6 (IIV-6).